Reading from the N-terminus, the 156-residue chain is Small ribosomal subunit protein uS7 (156 aa).

This sequence belongs to the universal ribosomal protein uS7 family. In terms of assembly, part of the 30S ribosomal subunit. Contacts proteins S9 and S11.

Functionally, one of the primary rRNA binding proteins, it binds directly to 16S rRNA where it nucleates assembly of the head domain of the 30S subunit. Is located at the subunit interface close to the decoding center, probably blocks exit of the E-site tRNA. The polypeptide is Small ribosomal subunit protein uS7 (Tolumonas auensis (strain DSM 9187 / NBRC 110442 / TA 4)).